The sequence spans 417 residues: Tryptophan synthase beta chain (417 aa).

Residue Lys-108 is modified to N6-(pyridoxal phosphate)lysine.

It belongs to the TrpB family. As to quaternary structure, tetramer of two alpha and two beta chains. Requires pyridoxal 5'-phosphate as cofactor.

It carries out the reaction (1S,2R)-1-C-(indol-3-yl)glycerol 3-phosphate + L-serine = D-glyceraldehyde 3-phosphate + L-tryptophan + H2O. Its pathway is amino-acid biosynthesis; L-tryptophan biosynthesis; L-tryptophan from chorismate: step 5/5. The beta subunit is responsible for the synthesis of L-tryptophan from indole and L-serine. This chain is Tryptophan synthase beta chain (trpB), found in Mycobacterium leprae (strain TN).